Reading from the N-terminus, the 502-residue chain is Keratin, type II cytoskeletal 8 (502 aa).

The segment at 1 to 98 (MSVRSTKVTY…DPSIQQVRTE (98 aa)) is head. Residues S13, S26, S37, and S40 each carry the phosphoserine modification. A coil 1A region spans residues 99 to 134 (EKEQIKTLNNKFASFIDKVRFLEQQNKMLETKWNLL). The 312-residue stretch at 99–410 (EKEQIKTLNN…KLLEGEESRL (312 aa)) folds into the IF rod domain. Residues 135 to 151 (QNQKTTRSNMDGMFEAY) are linker 1. The coil 1B stretch occupies residues 152 to 243 (ISNLRRQLDG…QLYEEELREM (92 aa)). Residues 244–267 (QSQISDTSVVLSMDNNRSLDLDGI) are linker 12. Residues 268 to 406 (IAEVRAQYED…ATYRKLLEGE (139 aa)) are coil 2. Residues 269-390 (AEVRAQYEDV…DYQELMNVKL (122 aa)) form a necessary for interaction with PNN region. Positions 407 to 502 (ESRLESGFQN…SESSDVFSKP (96 aa)) are tail. 4 positions are modified to phosphoserine: S425, S428, S436, and S444.

This sequence belongs to the intermediate filament family. Heterotetramer of two type I and two type II keratins. Keratin-8 associates with keratin-18. Expressed in oocytes, eggs, embryos, liver and intestinal mucosa.

The protein resides in the cytoplasm. It localises to the nucleus. Its subcellular location is the nucleoplasm. The protein localises to the nucleus matrix. Functionally, together with KRT19, helps to link the contractile apparatus to dystrophin at the costameres of striated muscle. The chain is Keratin, type II cytoskeletal 8 from Xenopus laevis (African clawed frog).